The primary structure comprises 292 residues: MNFFEGTVLGLVQGLTEFLPVSSSAHLRIAAALAGWEDPGAAFTAVTQIGTETAVLIYFRRDIARIVAAWARSLTRREMRKDPDARTGWLVILGTLPIGLLGVTLQDAIEGPFRDLRLIATTLIVLGLILGGADWYASKGRPQGRHSPLRPRKVLEDLSVRDGLLYGLAQSAALIPGVSRSGATISGGLLLGYTREAAARYSFLLAMPAVLASGVFELRSIGGKDADVAWGPTILATFVAFVTGYAAIAWFLRYISTRSFAPFVLYRVGLGLLLFSLLVGGALSPDAGAPPG.

5 helical membrane passes run Trp-89–Ile-109, Leu-118–Ser-138, Phe-203–Gly-223, Pro-232–Leu-252, and Phe-263–Leu-283.

Belongs to the UppP family.

The protein resides in the cell membrane. It carries out the reaction di-trans,octa-cis-undecaprenyl diphosphate + H2O = di-trans,octa-cis-undecaprenyl phosphate + phosphate + H(+). In terms of biological role, catalyzes the dephosphorylation of undecaprenyl diphosphate (UPP). Confers resistance to bacitracin. The protein is Undecaprenyl-diphosphatase 2 of Frankia casuarinae (strain DSM 45818 / CECT 9043 / HFP020203 / CcI3).